Reading from the N-terminus, the 309-residue chain is Succinate--CoA ligase [ADP-forming] subunit alpha-2, mitochondrial (309 aa).

The N-terminal 9 residues, 1 to 9, are a transit peptide targeting the hydrogenosome; sequence MLSSSFERN. CoA is bound by residues K54 and 107-109; that span reads ITE. Position 171 (Y171) interacts with substrate. Catalysis depends on H262, which acts as the Tele-phosphohistidine intermediate.

This sequence belongs to the succinate/malate CoA ligase alpha subunit family. As to quaternary structure, heterodimer of an alpha and a beta subunit.

The protein localises to the hydrogenosome lumen. The catalysed reaction is succinate + ATP + CoA = succinyl-CoA + ADP + phosphate. The protein operates within carbohydrate metabolism; tricarboxylic acid cycle; succinate from succinyl-CoA (ligase route): step 1/1. In terms of biological role, succinyl-CoA synthetase functions in the citric acid cycle (TCA), coupling the hydrolysis of succinyl-CoA to the synthesis of ATP and thus represents the only step of substrate-level phosphorylation in the TCA. The alpha subunit of the enzyme binds the substrates coenzyme A and phosphate, while succinate binding and nucleotide specificity is provided by the beta subunit. The sequence is that of Succinate--CoA ligase [ADP-forming] subunit alpha-2, mitochondrial (ALPHA-SCS2) from Trichomonas vaginalis.